The chain runs to 477 residues: Glycogen synthase (477 aa).

Lys-16 is a binding site for ADP-alpha-D-glucose.

Belongs to the glycosyltransferase 1 family. Bacterial/plant glycogen synthase subfamily.

The enzyme catalyses [(1-&gt;4)-alpha-D-glucosyl](n) + ADP-alpha-D-glucose = [(1-&gt;4)-alpha-D-glucosyl](n+1) + ADP + H(+). It functions in the pathway glycan biosynthesis; glycogen biosynthesis. Its function is as follows. Synthesizes alpha-1,4-glucan chains using ADP-glucose. In Oceanobacillus iheyensis (strain DSM 14371 / CIP 107618 / JCM 11309 / KCTC 3954 / HTE831), this protein is Glycogen synthase.